A 31-amino-acid polypeptide reads, in one-letter code: NRLCCSQYGFCGTTSEYCSRANGCQSNCWGR.

In terms of domain architecture, Chitin-binding type-1 spans 1–30 (NRLCCSQYGFCGTTSEYCSRANGCQSNCWG). Disulfide bonds link Cys-4-Cys-18 and Cys-24-Cys-28.

Seeds (at protein level).

In terms of biological role, chitin-binding protein which functions in defense against chitin-containing fungal pathogens. This Moringa oleifera (Horseradish tree) protein is Morintide mO3.